We begin with the raw amino-acid sequence, 135 residues long: MVLESISKIIKIQLPAYLKKLPLPETIGGFARLTVSEWLRLLPLLGILALLGYLTIRPFLPKKKKQRDSLINLKIQKENPKVVNEIDIEDLRTPNVCYCRCWRSKTFPVCDKSHIKHNELTGDNVGPLILKKKTL.

The Lumenal segment spans residues 1-37 (MVLESISKIIKIQLPAYLKKLPLPETIGGFARLTVSE). A helical transmembrane segment spans residues 38 to 60 (WLRLLPLLGILALLGYLTIRPFL). The Cytoplasmic segment spans residues 61–135 (PKKKKQRDSL…GPLILKKKTL (75 aa)). Residues C99, C101, C110, and H114 each contribute to the [2Fe-2S] cluster site.

The protein belongs to the CISD protein family. CISD2 subfamily. In terms of assembly, homodimer. Requires [2Fe-2S] cluster as cofactor.

The protein resides in the endoplasmic reticulum membrane. Its subcellular location is the mitochondrion outer membrane. Functionally, regulator of autophagy that contributes to antagonize becn1-mediated cellular autophagy at the endoplasmic reticulum. Participates in the interaction of bcl2 with becn1 and is required for bcl2-mediated depression of endoplasmic reticulum Ca(2+) stores during autophagy. This is CDGSH iron-sulfur domain-containing protein 2 (cisd2) from Danio rerio (Zebrafish).